A 186-amino-acid polypeptide reads, in one-letter code: Ribosome-recycling factor (186 aa).

It belongs to the RRF family.

It localises to the cytoplasm. In terms of biological role, responsible for the release of ribosomes from messenger RNA at the termination of protein biosynthesis. May increase the efficiency of translation by recycling ribosomes from one round of translation to another. This Rickettsia bellii (strain OSU 85-389) protein is Ribosome-recycling factor.